We begin with the raw amino-acid sequence, 207 residues long: Guanylate kinase (207 aa).

One can recognise a Guanylate kinase-like domain in the interval 6-185 (GLLIVLSGPS…AKQRIQSIVE (180 aa)). 13–20 (GPSGVGKG) serves as a coordination point for ATP.

Belongs to the guanylate kinase family.

It localises to the cytoplasm. It carries out the reaction GMP + ATP = GDP + ADP. Its function is as follows. Essential for recycling GMP and indirectly, cGMP. In Staphylococcus saprophyticus subsp. saprophyticus (strain ATCC 15305 / DSM 20229 / NCIMB 8711 / NCTC 7292 / S-41), this protein is Guanylate kinase.